A 458-amino-acid polypeptide reads, in one-letter code: Divalent metal cation transporter MntH (458 aa).

The next 11 helical transmembrane spans lie at 38-58 (GFWK…VGYM), 76-96 (SLLS…AMAA), 119-139 (GGFL…AEII), 151-171 (MPLI…LLLM), 180-200 (AVVA…VILA), 223-243 (MLYL…LFLG), 275-295 (LTMA…LFFG), 315-335 (IVGA…LLAS), 370-390 (LMSV…EAKI), 393-413 (LLTF…IPLV), and 437-457 (FISG…LGFV).

The protein belongs to the NRAMP family.

It localises to the cell membrane. H(+)-stimulated, divalent metal cation uptake system. In Lacticaseibacillus paracasei (strain ATCC 334 / BCRC 17002 / CCUG 31169 / CIP 107868 / KCTC 3260 / NRRL B-441) (Lactobacillus paracasei), this protein is Divalent metal cation transporter MntH.